The chain runs to 130 residues: D-ribose pyranase (130 aa).

The Proton donor role is filled by H20. Substrate contacts are provided by residues D28, H97, and 119–121 (YAN).

This sequence belongs to the RbsD / FucU family. RbsD subfamily. Homodecamer.

The protein resides in the cytoplasm. It catalyses the reaction beta-D-ribopyranose = beta-D-ribofuranose. The protein operates within carbohydrate metabolism; D-ribose degradation; D-ribose 5-phosphate from beta-D-ribopyranose: step 1/2. Its function is as follows. Catalyzes the interconversion of beta-pyran and beta-furan forms of D-ribose. This chain is D-ribose pyranase, found in Heliobacterium modesticaldum (strain ATCC 51547 / Ice1).